The chain runs to 239 residues: Serine protease SplD (239 aa).

A signal peptide spans 1–36 (MNKNIIIKSIAALTILTSITGVGTTVVDGIQQTAKA). Residues histidine 75, aspartate 114, and serine 192 each act as charge relay system in the active site.

It belongs to the peptidase S1B family.

It localises to the secreted. The chain is Serine protease SplD (splD) from Staphylococcus aureus (strain COL).